A 206-amino-acid chain; its full sequence is Large ribosomal subunit protein uL13w (206 aa).

This sequence belongs to the universal ribosomal protein uL13 family.

The chain is Large ribosomal subunit protein uL13w (RPL13AD) from Arabidopsis thaliana (Mouse-ear cress).